We begin with the raw amino-acid sequence, 362 residues long: Cytoskeleton protein RodZ (362 aa).

Residues 1–111 (MNTEASQDQT…LGKKHKKRDG (111 aa)) are Cytoplasmic-facing. An HTH cro/C1-type domain is found at 19 to 79 (LRQARESLGL…KLVHLPEDEL (61 aa)). A DNA-binding region (H-T-H motif) is located at residues 30 to 49 (QQTVAERLCLKVSTIRDIEE). A helical; Signal-anchor for type II membrane protein transmembrane segment spans residues 112-132 (WLMSFTWLIVLVVLGLTGAWW). At 133–362 (WQNHQAQQAE…RVARLTVGVE (230 aa)) the chain is on the periplasmic side. Residues 151–277 (SAQLSQNGGQ…LPTADAGVSG (127 aa)) form a disordered region. The span at 193–221 (STSAVTNSATTSSATTSSVPTTSSVPKTT) shows a compositional bias: low complexity. Residues 223–242 (VPKTNSTEPVDTANTNTTMH) are compositionally biased toward polar residues. Low complexity predominate over residues 246–259 (AASAAVSPSQVPQP).

It belongs to the RodZ family.

It localises to the cell inner membrane. Its function is as follows. Cytoskeletal protein that is involved in cell-shape control through regulation of the length of the long axis. The polypeptide is Cytoskeleton protein RodZ (Yersinia pseudotuberculosis serotype IB (strain PB1/+)).